A 152-amino-acid chain; its full sequence is Nucleoside diphosphate kinase (152 aa).

Residues Lys-11, Phe-59, Arg-87, Thr-93, Arg-104, and Asn-114 each coordinate ATP. His-117 serves as the catalytic Pros-phosphohistidine intermediate.

This sequence belongs to the NDK family. As to quaternary structure, homotetramer. Requires Mg(2+) as cofactor.

It localises to the cytoplasm. The enzyme catalyses a 2'-deoxyribonucleoside 5'-diphosphate + ATP = a 2'-deoxyribonucleoside 5'-triphosphate + ADP. It catalyses the reaction a ribonucleoside 5'-diphosphate + ATP = a ribonucleoside 5'-triphosphate + ADP. Major role in the synthesis of nucleoside triphosphates other than ATP. The ATP gamma phosphate is transferred to the NDP beta phosphate via a ping-pong mechanism, using a phosphorylated active-site intermediate. The polypeptide is Nucleoside diphosphate kinase (Prochlorococcus marinus (strain MIT 9313)).